Reading from the N-terminus, the 87-residue chain is Kappa 1b-bungarotoxin (87 aa).

Residues 1-21 (MKTLLLTLVVVTIVCLDLGYT) form the signal peptide. 5 cysteine pairs are disulfide-bonded: C24/C42, C35/C63, C48/C52, C67/C79, and C80/C85.

The protein belongs to the three-finger toxin family. Long-chain subfamily. Kappa-neurotoxin sub-subfamily. Homo- and heterodimer; non-covalently linked. As to expression, expressed by the venom gland.

It is found in the secreted. Functionally, postsynaptic neurotoxin that binds and inhibits neuronal nicotinic acetylcholine receptors (nAChR) with high affinity (IC(50)&lt;100 nM). Is a selective, and slowly reversible antagonist of alpha-3/CHRNA3-containing and some alpha-4/CHRNA4-containing AChRs. This chain is Kappa 1b-bungarotoxin, found in Bungarus candidus (Malayan krait).